The chain runs to 116 residues: Large ribosomal subunit protein bL19 (116 aa).

This sequence belongs to the bacterial ribosomal protein bL19 family.

Its function is as follows. This protein is located at the 30S-50S ribosomal subunit interface and may play a role in the structure and function of the aminoacyl-tRNA binding site. This is Large ribosomal subunit protein bL19 from Mycoplasma mobile (strain ATCC 43663 / 163K / NCTC 11711) (Mesomycoplasma mobile).